The primary structure comprises 192 residues: ATP-dependent Clp protease proteolytic subunit 1 (192 aa).

The active-site Nucleophile is the Ser92. His117 is an active-site residue.

It belongs to the peptidase S14 family. As to quaternary structure, fourteen ClpP subunits assemble into 2 heptameric rings which stack back to back to give a disk-like structure with a central cavity, resembling the structure of eukaryotic proteasomes.

The protein localises to the cytoplasm. It carries out the reaction Hydrolysis of proteins to small peptides in the presence of ATP and magnesium. alpha-casein is the usual test substrate. In the absence of ATP, only oligopeptides shorter than five residues are hydrolyzed (such as succinyl-Leu-Tyr-|-NHMec, and Leu-Tyr-Leu-|-Tyr-Trp, in which cleavage of the -Tyr-|-Leu- and -Tyr-|-Trp bonds also occurs).. Cleaves peptides in various proteins in a process that requires ATP hydrolysis. Has a chymotrypsin-like activity. Plays a major role in the degradation of misfolded proteins. This chain is ATP-dependent Clp protease proteolytic subunit 1, found in Chlamydia abortus (strain DSM 27085 / S26/3) (Chlamydophila abortus).